A 250-amino-acid polypeptide reads, in one-letter code: UPF0758 protein tlr1707 (250 aa).

An MPN domain is found at 116–239 (TIIDSPALAA…YQSLREITPL (124 aa)). Residues His188, His190, and Asp201 each contribute to the Zn(2+) site. The short motif at 188 to 201 (HNHPSGNLSPSQAD) is the JAMM motif element.

The protein belongs to the UPF0758 family.

In Thermosynechococcus vestitus (strain NIES-2133 / IAM M-273 / BP-1), this protein is UPF0758 protein tlr1707.